We begin with the raw amino-acid sequence, 259 residues long: tRNA pseudouridine synthase A (259 aa).

Aspartate 50 (nucleophile) is an active-site residue. Tyrosine 101 is a binding site for substrate.

Belongs to the tRNA pseudouridine synthase TruA family.

The enzyme catalyses uridine(38/39/40) in tRNA = pseudouridine(38/39/40) in tRNA. Functionally, formation of pseudouridine at positions 38, 39 and 40 in the anticodon stem and loop of transfer RNAs. The protein is tRNA pseudouridine synthase A of Methanocaldococcus jannaschii (strain ATCC 43067 / DSM 2661 / JAL-1 / JCM 10045 / NBRC 100440) (Methanococcus jannaschii).